Here is a 172-residue protein sequence, read N- to C-terminus: Chromosome-anchoring protein RacA (172 aa).

The H-T-H motif DNA-binding region spans 5 to 25 (TSDVAIRLGVSPKTIQRWVRK). Disordered regions lie at residues 57 to 76 (AAMEAPPTPKRPPTPLRNNI) and 142 to 172 (QLNNRPPSSHETSDEPKQKRRGLGRVMGLFA). Over residues 62-71 (PPTPKRPPTP) the composition is skewed to pro residues. Residues 83–146 (ESIEPEIARV…ARLEQQLNNR (64 aa)) adopt a coiled-coil conformation. Positions 142-151 (QLNNRPPSSH) are enriched in polar residues.

The protein belongs to the RacA family.

The protein localises to the cytoplasm. Its function is as follows. Required for the formation of axial filaments and for anchoring the origin regions at the cell poles in sporulating cells, thus ensuring proper chromosome segregation in the prespore. Binds in a dispersed manner throughout the chromosome but preferentially to sites clustered in the origin portion of the chromosome, causing condensation of the chromosome and its remodeling into an elongated, anchored structure. In Geobacillus kaustophilus (strain HTA426), this protein is Chromosome-anchoring protein RacA.